A 234-amino-acid polypeptide reads, in one-letter code: Triosephosphate isomerase (234 aa).

8-10 (NFK) is a substrate binding site. The active-site Electrophile is His-90. Residue Glu-159 is the Proton acceptor of the active site. Substrate-binding residues include Gly-165 and Ser-197.

This sequence belongs to the triosephosphate isomerase family. In terms of assembly, homodimer.

The protein resides in the cytoplasm. The enzyme catalyses D-glyceraldehyde 3-phosphate = dihydroxyacetone phosphate. Its pathway is carbohydrate biosynthesis; gluconeogenesis. It participates in carbohydrate degradation; glycolysis; D-glyceraldehyde 3-phosphate from glycerone phosphate: step 1/1. Functionally, involved in the gluconeogenesis. Catalyzes stereospecifically the conversion of dihydroxyacetone phosphate (DHAP) to D-glyceraldehyde-3-phosphate (G3P). This chain is Triosephosphate isomerase, found in Helicobacter pylori (strain J99 / ATCC 700824) (Campylobacter pylori J99).